The primary structure comprises 618 residues: Arginine--tRNA ligase (618 aa).

Positions 113-123 match the 'HIGH' region motif; sequence ANPIHPLHIGH.

It belongs to the class-I aminoacyl-tRNA synthetase family.

It localises to the cytoplasm. It carries out the reaction tRNA(Arg) + L-arginine + ATP = L-arginyl-tRNA(Arg) + AMP + diphosphate. The protein is Arginine--tRNA ligase of Sulfolobus acidocaldarius (strain ATCC 33909 / DSM 639 / JCM 8929 / NBRC 15157 / NCIMB 11770).